The following is a 183-amino-acid chain: DNA-directed RNA polymerase subunit Rpo7 (183 aa).

The S1 motif domain occupies 82-164; the sequence is HEVIEGEVSQ…RLPRIALTMK (83 aa).

This sequence belongs to the eukaryotic RPB7/RPC8 RNA polymerase subunit family. Part of the 13-subunit RNA polymerase complex. Forms a stalk with Rpo4 that extends from the main structure.

It localises to the cytoplasm. The catalysed reaction is RNA(n) + a ribonucleoside 5'-triphosphate = RNA(n+1) + diphosphate. DNA-dependent RNA polymerase (RNAP) catalyzes the transcription of DNA into RNA using the four ribonucleoside triphosphates as substrates. Functionally, reconstitution experiments show this subunit is required for basic activity. This chain is DNA-directed RNA polymerase subunit Rpo7, found in Sulfolobus acidocaldarius (strain ATCC 33909 / DSM 639 / JCM 8929 / NBRC 15157 / NCIMB 11770).